The following is a 373-amino-acid chain: Chaperone protein DnaJ (373 aa).

Residues 4-68 (NYYQILGVSK…QTRAAYDRLG (65 aa)) enclose the J domain. The CR-type zinc-finger motif lies at 136-214 (GIEKNISFSS…CHGMGRYHKQ (79 aa)). 8 residues coordinate Zn(2+): Cys-149, Cys-152, Cys-166, Cys-169, Cys-188, Cys-191, Cys-202, and Cys-205. CXXCXGXG motif repeat units lie at residues 149 to 156 (CDTCHGSG), 166 to 173 (CDACSGVG), 188 to 195 (CHKCQGNG), and 202 to 209 (CKKCHGMG).

Belongs to the DnaJ family. In terms of assembly, homodimer. The cofactor is Zn(2+).

Its subcellular location is the cytoplasm. Participates actively in the response to hyperosmotic and heat shock by preventing the aggregation of stress-denatured proteins and by disaggregating proteins, also in an autonomous, DnaK-independent fashion. Unfolded proteins bind initially to DnaJ; upon interaction with the DnaJ-bound protein, DnaK hydrolyzes its bound ATP, resulting in the formation of a stable complex. GrpE releases ADP from DnaK; ATP binding to DnaK triggers the release of the substrate protein, thus completing the reaction cycle. Several rounds of ATP-dependent interactions between DnaJ, DnaK and GrpE are required for fully efficient folding. Also involved, together with DnaK and GrpE, in the DNA replication of plasmids through activation of initiation proteins. The protein is Chaperone protein DnaJ of Rickettsia peacockii (strain Rustic).